Consider the following 453-residue polypeptide: Homogentisate 1,2-dioxygenase (453 aa).

The active-site Proton acceptor is the His306. 2 residues coordinate Fe cation: His349 and Glu355. 2 residues coordinate homogentisate: Tyr364 and His385. Residue His385 coordinates Fe cation.

The protein belongs to the homogentisate dioxygenase family. Hexamer; dimer of trimers. The cofactor is Fe cation.

The catalysed reaction is homogentisate + O2 = 4-maleylacetoacetate + H(+). The protein operates within amino-acid degradation; L-phenylalanine degradation; acetoacetate and fumarate from L-phenylalanine: step 4/6. In terms of biological role, involved in the catabolism of homogentisate (2,5-dihydroxyphenylacetate or 2,5-OH-PhAc), a central intermediate in the degradation of phenylalanine and tyrosine. Catalyzes the oxidative ring cleavage of the aromatic ring of homogentisate to yield maleylacetoacetate. This chain is Homogentisate 1,2-dioxygenase, found in Rhizobium johnstonii (strain DSM 114642 / LMG 32736 / 3841) (Rhizobium leguminosarum bv. viciae).